Consider the following 621-residue polypeptide: MLLLPSPADGRGTAITHALTSASTLCRVEPVGRWFEAFVKRRNRNASASFQELEDKKELSEESEDEELQLEEFAMLKTLDPKDWKNQDHYAVLGLGHVRYKATQRQIKAAHKAMVLKHHPDKRKAAGEPIKEGDNDYFTCITKAYEMLSDPVKRRAFNSVDPTFDNSVPSKSEAKDNFFEVFSPVFERNSRWSNKKNVPKLGDMNSSFEDVDIFYSFWYNFDSWREFSYLDEEEKEKAECRDERRWIEKQNRATRAQRKKEEMNRIRTLVDNAYSCDPRIKKFKEEEKAKKEAEKKAKAEAKRKEQEAKEKQRQAELEAARLAKEKEEEEVRQQALLAKKEKDLQKKAIKKERQKLRNSCKTWNHFSDNEAERVKMMEEVEKLCDRLELASLQCLNETLTSCTKEVGKAALEKQIEEINEQIRKEKEEAEAHMRQASKNTEKSAGGGGNGSKNWSEDDLQLLIKAVNLFPAGTNSRWEVIANYMNIHSSSGVKRTAKDVIGKAKSLQKLDPHQKDDINKKAFDKFKKEHGVVPQADNAAPSERFEGPYTDFTPWTTEEQKLLEQALKTYPVNTPERWEKIAEAVPGRTKKDCMKRYKELVEMVKAKKAAQEQVLNASRAKK.

An N-acetylmethionine modification is found at M1. 4 positions are modified to phosphoserine: S47, S49, S60, and S63. In terms of domain architecture, J spans 88–161 (DHYAVLGLGH…VKRRAFNSVD (74 aa)). The segment at 160-250 (VDPTFDNSVP…RDERRWIEKQ (91 aa)) is ZRF1-UBD. S183 carries the phosphoserine modification. 2 disordered regions span residues 294–315 (EKKAKAEAKRKEQEAKEKQRQA) and 427–453 (EEAEAHMRQASKNTEKSAGGGGNGSKN). 2 consecutive SANT domains span residues 449 to 511 (NGSK…KLDP) and 549 to 604 (TDFT…EMVK).

Component of ribosome-associated complex (RAC), a heterodimer composed of Hsp70/DnaK-type chaperone HSPA14 and Hsp40/DnaJ-type chaperone DNAJC2. Interacts (via ZRF1-UBD region) with ID1. Phosphorylated in M (mitotic) phase.

The protein localises to the nucleus. Its subcellular location is the cytoplasm. The protein resides in the cytosol. In terms of biological role, acts both as a chaperone in the cytosol and as a chromatin regulator in the nucleus. When cytosolic, acts as a molecular chaperone: component of the ribosome-associated complex (RAC), a complex involved in folding or maintaining nascent polypeptides in a folding-competent state. In the RAC complex, stimulates the ATPase activity of the ribosome-associated pool of Hsp70-type chaperones HSPA14 that bind to the nascent polypeptide chain. When nuclear, mediates the switching from polycomb-repressed genes to an active state: specifically recruited at histone H2A ubiquitinated at 'Lys-119' (H2AK119ub), and promotes the displacement of the polycomb PRC1 complex from chromatin, thereby facilitating transcription activation. The sequence is that of DnaJ homolog subfamily C member 2 (DNAJC2) from Macaca fascicularis (Crab-eating macaque).